The following is a 166-amino-acid chain: Cytochrome b (166 aa).

4 helical membrane passes run 15–35 (FKDI…VLIN), 77–97 (LGGV…PFYN), 109–129 (INQI…WIGA), and 136–156 (YVLL…INPL).

Belongs to the cytochrome b family. In terms of assembly, the main subunits of complex b-c1 are: cytochrome b, cytochrome c1 and the Rieske protein. It depends on heme as a cofactor.

Its subcellular location is the mitochondrion inner membrane. Functionally, component of the ubiquinol-cytochrome c reductase complex (complex III or cytochrome b-c1 complex) that is part of the mitochondrial respiratory chain. The b-c1 complex mediates electron transfer from ubiquinol to cytochrome c. Contributes to the generation of a proton gradient across the mitochondrial membrane that is then used for ATP synthesis. The chain is Cytochrome b (mt:Cyt-b) from Drosophila subobscura (Fruit fly).